The chain runs to 173 residues: MPLNIEDKKAVVAEVSAQVAKAQTIVVAEYRGITVGDLTKLRATARTQGVYLRVLKNTLARRAVEGTPFAGLAEQMTGPLIYGISEDAVSSAKVLNDFAKTNDKLVLRAGSYNGNVLDAGAVKALASIPSRDELIAQLLGVMQAPVSGFARLLAAVAAKKAEGAPAEAEAPAA.

This sequence belongs to the universal ribosomal protein uL10 family. Part of the ribosomal stalk of the 50S ribosomal subunit. The N-terminus interacts with L11 and the large rRNA to form the base of the stalk. The C-terminus forms an elongated spine to which L12 dimers bind in a sequential fashion forming a multimeric L10(L12)X complex.

Functionally, forms part of the ribosomal stalk, playing a central role in the interaction of the ribosome with GTP-bound translation factors. The chain is Large ribosomal subunit protein uL10 from Cupriavidus metallidurans (strain ATCC 43123 / DSM 2839 / NBRC 102507 / CH34) (Ralstonia metallidurans).